The sequence spans 194 residues: Imidazoleglycerol-phosphate dehydratase (194 aa).

The protein belongs to the imidazoleglycerol-phosphate dehydratase family.

Its subcellular location is the cytoplasm. The enzyme catalyses D-erythro-1-(imidazol-4-yl)glycerol 3-phosphate = 3-(imidazol-4-yl)-2-oxopropyl phosphate + H2O. Its pathway is amino-acid biosynthesis; L-histidine biosynthesis; L-histidine from 5-phospho-alpha-D-ribose 1-diphosphate: step 6/9. The protein is Imidazoleglycerol-phosphate dehydratase of Caldicellulosiruptor bescii (strain ATCC BAA-1888 / DSM 6725 / KCTC 15123 / Z-1320) (Anaerocellum thermophilum).